The primary structure comprises 248 residues: 3-oxoacyl-[acyl-carrier-protein] reductase FabG (248 aa).

NADP(+) contacts are provided by residues 14–17, 64–65, and N91; these read GGSR and DV. S143 provides a ligand contact to substrate. Y156 (proton acceptor) is an active-site residue. NADP(+) contacts are provided by residues 156 to 160 and I189; that span reads YAAAK.

This sequence belongs to the short-chain dehydrogenases/reductases (SDR) family. As to quaternary structure, homotetramer.

It catalyses the reaction a (3R)-hydroxyacyl-[ACP] + NADP(+) = a 3-oxoacyl-[ACP] + NADPH + H(+). The protein operates within lipid metabolism; fatty acid biosynthesis. Functionally, catalyzes the NADPH-dependent reduction of beta-ketoacyl-ACP substrates to beta-hydroxyacyl-ACP products, the first reductive step in the elongation cycle of fatty acid biosynthesis. This chain is 3-oxoacyl-[acyl-carrier-protein] reductase FabG (fabG), found in Chlamydia pneumoniae (Chlamydophila pneumoniae).